We begin with the raw amino-acid sequence, 469 residues long: Trigger factor (469 aa).

Residues 162–243 (GDFVSIDLSA…VKSVKERELP (82 aa)) form the PPIase FKBP-type domain. The tract at residues 429–469 (NTIDTSEFFGKHAQSDKADQKTEEADPNSDAIDEEVDEAAE) is disordered. Residues 437-452 (FGKHAQSDKADQKTEE) show a composition bias toward basic and acidic residues. The segment covering 453-469 (ADPNSDAIDEEVDEAAE) has biased composition (acidic residues).

It belongs to the FKBP-type PPIase family. Tig subfamily.

It localises to the cytoplasm. The enzyme catalyses [protein]-peptidylproline (omega=180) = [protein]-peptidylproline (omega=0). Functionally, involved in protein export. Acts as a chaperone by maintaining the newly synthesized protein in an open conformation. Functions as a peptidyl-prolyl cis-trans isomerase. The chain is Trigger factor from Mycobacterium leprae (strain Br4923).